We begin with the raw amino-acid sequence, 238 residues long: TATA-box-binding protein (238 aa).

Residues 1–58 are disordered; the sequence is MDLKLPPTNPTNPQQAKTFMKSIEEDEKNKAEDLDIIKKEDIDEPKQEDTTDGNGGGG. A compositionally biased stretch (basic and acidic residues) spans 27–49; sequence EKNKAEDLDIIKKEDIDEPKQED. 2 consecutive repeat copies span residues 65-141 and 155-232.

This sequence belongs to the TBP family. Belongs to the TFIID complex together with the TBP-associated factors (TAFs). Binds DNA as monomer.

The protein resides in the nucleus. Functionally, general transcription factor that functions at the core of the DNA-binding multiprotein factor TFIID. Binding of TFIID to the TATA box is the initial transcriptional step of the pre-initiation complex (PIC), playing a role in the activation of eukaryotic genes transcribed by RNA polymerase II. The polypeptide is TATA-box-binding protein (TBP1) (Candida albicans (strain SC5314 / ATCC MYA-2876) (Yeast)).